The sequence spans 88 residues: Small ribosomal subunit protein uS17 (88 aa).

The protein belongs to the universal ribosomal protein uS17 family. As to quaternary structure, part of the 30S ribosomal subunit.

Its function is as follows. One of the primary rRNA binding proteins, it binds specifically to the 5'-end of 16S ribosomal RNA. The polypeptide is Small ribosomal subunit protein uS17 (Lactobacillus acidophilus (strain ATCC 700396 / NCK56 / N2 / NCFM)).